The primary structure comprises 121 residues: Fluoride-specific ion channel FluC (121 aa).

The next 4 helical transmembrane spans lie at 5–25, 33–53, 66–83, and 98–118; these read LLIF…TISI, FPWG…VFYT, LMLT…STFS, and FFTY…LGIW. Na(+)-binding residues include glycine 74 and threonine 77.

It belongs to the fluoride channel Fluc/FEX (TC 1.A.43) family.

It is found in the cell inner membrane. The enzyme catalyses fluoride(in) = fluoride(out). With respect to regulation, na(+) is not transported, but it plays an essential structural role and its presence is essential for fluoride channel function. Its function is as follows. Fluoride-specific ion channel. Important for reducing fluoride concentration in the cell, thus reducing its toxicity. This is Fluoride-specific ion channel FluC from Phocaeicola vulgatus (strain ATCC 8482 / DSM 1447 / JCM 5826 / CCUG 4940 / NBRC 14291 / NCTC 11154) (Bacteroides vulgatus).